We begin with the raw amino-acid sequence, 347 residues long: D-alanine--D-alanine ligase (347 aa).

An ATP-grasp domain is found at 134-332; sequence KLYAKDLGVK…LAQSLPKTPK (199 aa). Position 161-216 (161-216) interacts with ATP; that stretch reads LIGFNFPFIVKPSNAGSSLGVNVVKEEKELIYALDSAFEYSKEVLIEPFIQGVKEY. Asp288, Glu300, and Asn302 together coordinate Mg(2+).

It belongs to the D-alanine--D-alanine ligase family. Mg(2+) is required as a cofactor. It depends on Mn(2+) as a cofactor.

It is found in the cytoplasm. It carries out the reaction 2 D-alanine + ATP = D-alanyl-D-alanine + ADP + phosphate + H(+). It functions in the pathway cell wall biogenesis; peptidoglycan biosynthesis. In terms of biological role, cell wall formation. This chain is D-alanine--D-alanine ligase, found in Helicobacter pylori (strain J99 / ATCC 700824) (Campylobacter pylori J99).